The following is a 313-amino-acid chain: MRTIFMGTPDFSVPFIEAIARSTHNLNLVVTQPDRRKGRGKELQPPPAKRKAEELGIDVFQPESIHNNYAYQILSDIEPHLIVTAAYGQILPRKILDLPRIKAINVHASLLPEYRGAAPIHRAVMDGKEQTGVTIMEMCDKMDAGDILNYESVDIGKTDTTGDVYKQIITVGPQLLIETMDLLEKNQVTPLKQDENQVSYAPKLKKEDEYLDFSKYTNTEVFNRVRGLNPWPGAFTKFEGKRLKIWETKVHNSSSFNSNSKPGEIIEINQQGPVVKCCQGSVILTKIQPSGKKAMTGEQFIRGYDIKSGIQLE.

Residues 32–51 (QPDRRKGRGKELQPPPAKRK) are disordered. 109-112 (SLLP) provides a ligand contact to (6S)-5,6,7,8-tetrahydrofolate.

This sequence belongs to the Fmt family.

The enzyme catalyses L-methionyl-tRNA(fMet) + (6R)-10-formyltetrahydrofolate = N-formyl-L-methionyl-tRNA(fMet) + (6S)-5,6,7,8-tetrahydrofolate + H(+). Functionally, attaches a formyl group to the free amino group of methionyl-tRNA(fMet). The formyl group appears to play a dual role in the initiator identity of N-formylmethionyl-tRNA by promoting its recognition by IF2 and preventing the misappropriation of this tRNA by the elongation apparatus. This is Methionyl-tRNA formyltransferase from Natranaerobius thermophilus (strain ATCC BAA-1301 / DSM 18059 / JW/NM-WN-LF).